Here is a 235-residue protein sequence, read N- to C-terminus: Ribosomal RNA large subunit methyltransferase E (235 aa).

S-adenosyl-L-methionine contacts are provided by Gly76, Trp78, Asp99, Asp115, and Asp139. Lys179 serves as the catalytic Proton acceptor.

Belongs to the class I-like SAM-binding methyltransferase superfamily. RNA methyltransferase RlmE family.

It is found in the cytoplasm. It catalyses the reaction uridine(2552) in 23S rRNA + S-adenosyl-L-methionine = 2'-O-methyluridine(2552) in 23S rRNA + S-adenosyl-L-homocysteine + H(+). Functionally, specifically methylates the uridine in position 2552 of 23S rRNA at the 2'-O position of the ribose in the fully assembled 50S ribosomal subunit. This Rhodopseudomonas palustris (strain BisA53) protein is Ribosomal RNA large subunit methyltransferase E.